The primary structure comprises 276 residues: Undecaprenyl-diphosphatase (276 aa).

7 helical membrane passes run 48 to 68 (AANS…AIVF), 92 to 112 (LSIA…FLFE), 119 to 139 (LFSV…MLFA), 155 to 175 (ISYK…WPGF), 196 to 216 (ADFT…LSLV), 225 to 245 (DLMP…LFVV), and 255 to 275 (IKLV…LLIM).

The protein belongs to the UppP family.

It is found in the cell membrane. It carries out the reaction di-trans,octa-cis-undecaprenyl diphosphate + H2O = di-trans,octa-cis-undecaprenyl phosphate + phosphate + H(+). Functionally, catalyzes the dephosphorylation of undecaprenyl diphosphate (UPP). Confers resistance to bacitracin. The chain is Undecaprenyl-diphosphatase from Bacillus subtilis (strain 168).